Consider the following 176-residue polypeptide: NAD(P)H-quinone oxidoreductase subunit 6, chloroplastic (176 aa).

Helical transmembrane passes span 10–30 (FLLV…VLFT), 33–53 (IFSA…YILA), 63–83 (LLIY…FMSG), 105–125 (ISLF…GIIW), and 152–172 (FFLP…GAIA).

Belongs to the complex I subunit 6 family. As to quaternary structure, NDH is composed of at least 16 different subunits, 5 of which are encoded in the nucleus.

Its subcellular location is the plastid. The protein resides in the chloroplast thylakoid membrane. The catalysed reaction is a plastoquinone + NADH + (n+1) H(+)(in) = a plastoquinol + NAD(+) + n H(+)(out). It catalyses the reaction a plastoquinone + NADPH + (n+1) H(+)(in) = a plastoquinol + NADP(+) + n H(+)(out). Its function is as follows. NDH shuttles electrons from NAD(P)H:plastoquinone, via FMN and iron-sulfur (Fe-S) centers, to quinones in the photosynthetic chain and possibly in a chloroplast respiratory chain. The immediate electron acceptor for the enzyme in this species is believed to be plastoquinone. Couples the redox reaction to proton translocation, and thus conserves the redox energy in a proton gradient. The sequence is that of NAD(P)H-quinone oxidoreductase subunit 6, chloroplastic (ndhG) from Spinacia oleracea (Spinach).